A 276-amino-acid polypeptide reads, in one-letter code: Putative pyruvate, phosphate dikinase regulatory protein (276 aa).

150 to 157 serves as a coordination point for ADP; it reads GVSRTSKT.

It belongs to the pyruvate, phosphate/water dikinase regulatory protein family. PDRP subfamily.

The catalysed reaction is N(tele)-phospho-L-histidyl/L-threonyl-[pyruvate, phosphate dikinase] + ADP = N(tele)-phospho-L-histidyl/O-phospho-L-threonyl-[pyruvate, phosphate dikinase] + AMP + H(+). It catalyses the reaction N(tele)-phospho-L-histidyl/O-phospho-L-threonyl-[pyruvate, phosphate dikinase] + phosphate + H(+) = N(tele)-phospho-L-histidyl/L-threonyl-[pyruvate, phosphate dikinase] + diphosphate. Functionally, bifunctional serine/threonine kinase and phosphorylase involved in the regulation of the pyruvate, phosphate dikinase (PPDK) by catalyzing its phosphorylation/dephosphorylation. The chain is Putative pyruvate, phosphate dikinase regulatory protein from Lacticaseibacillus casei (strain BL23) (Lactobacillus casei).